Consider the following 353-residue polypeptide: Aliphatic aldoxime dehydratase (353 aa).

Position 219 (serine 219) interacts with an aliphatic aldoxime. Histidine 299 contacts heme b. Histidine 320 provides a ligand contact to an aliphatic aldoxime. Histidine 320 is an active-site residue.

This sequence belongs to the heme-containing dehydratase family. Homodimer. Heme b is required as a cofactor.

It catalyses the reaction an aliphatic aldoxime = a nitrile + H2O. Active when the heme iron is in the ferrous state. The activity is enhanced by reducing agents, such as Na(2)S, Na(2)S(2)(O4), 2-mercaptoethanol, and L-cysteine and supplementary additions of electron acceptors such as flavins, sulfite ion, and vitamin K3. The effect of various chemicals on the enzyme activity is different in the presence and absence of the reducing reagent, Na(2)S, which acts not only as a reductant but also changes the substrate specificity of the enzyme. In terms of biological role, catalyzes the dehydration of aldoximes to their corresponding nitrile. Is active toward various arylalkyl- and alkyl-aldoximes, and to a lesser extent toward aryl-aldoximes. This is Aliphatic aldoxime dehydratase from Rhodococcus erythropolis (Arthrobacter picolinophilus).